The chain runs to 62 residues: Alpha-conotoxin ViIA (62 aa).

The signal sequence occupies residues 1–18 (MGMRMMFVVFLLVVFASS). Positions 19 to 45 (VTLDRASYGRYASPVDRASALIAQAIL) are excised as a propeptide. 2 disulfide bridges follow: cysteine 48–cysteine 54 and cysteine 49–cysteine 61.

The protein belongs to the conotoxin A superfamily. The toxin is inactive on the alpha-3-beta-2 nAChR when the disulfide bond connectivity is C1-C4 and C2-C3 (ViIA-I) (IC(50)&gt;10000 nM). As to expression, expressed by the venom duct.

Its subcellular location is the secreted. Its function is as follows. Alpha-conotoxins act on postsynaptic membranes, they bind to the nicotinic acetylcholine receptors (nAChR) and thus inhibit them. This toxin selectively inhibits nicotinic acetylcholine receptor (nAChR) alpha-3-beta-2 subtype (IC(50)=845.5 nM). In Conus virgo (Virgin cone), this protein is Alpha-conotoxin ViIA.